The chain runs to 185 residues: Capsid protein (185 aa).

Positions 136–185 (NAPILSTLPETTVVRRRDRGRSPRRRTPSPRRRRSPSPRRRRSQSRESQC) are disordered. A compositionally biased stretch (basic residues) spans 149-178 (VRRRDRGRSPRRRTPSPRRRRSPSPRRRRS). A phosphoserine; by host mark is found at Ser-157, Ser-164, and Ser-172. A 1; half-length repeat occupies 157–163 (SPRRRTP). Residues 157 to 179 (SPRRRTPSPRRRRSPSPRRRRSQ) form a 3 X 8 AA repeats of S-P-R-R-R-[PR]-S-Q region. The short motif at 160–177 (RRTPSPRRRRSPSPRRRR) is the Bipartite nuclear localization signal element. 2 consecutive repeat copies span residues 164–171 (SPRRRRSP) and 172–179 (SPRRRRSQ). The tract at residues 179–185 (QSRESQC) is RNA binding.

It belongs to the orthohepadnavirus core antigen family. In terms of assembly, homodimerizes, then multimerizes. Interacts with cytosol exposed regions of viral L glycoprotein present in the reticulum-to-Golgi compartment. Interacts with human FLNB. Phosphorylated form interacts with host importin alpha; this interaction depends on the exposure of the NLS, which itself depends upon genome maturation and/or phosphorylation of the capsid protein. Interacts with host NUP153. Post-translationally, phosphorylated by host SRPK1, SRPK2, and maybe protein kinase C or GAPDH. Phosphorylation is critical for pregenomic RNA packaging. Protein kinase C phosphorylation is stimulated by HBx protein and may play a role in transport of the viral genome to the nucleus at the late step during the viral replication cycle.

It is found in the virion. The protein localises to the host cytoplasm. Self assembles to form an icosahedral capsid. Most capsids appear to be large particles with an icosahedral symmetry of T=4 and consist of 240 copies of capsid protein, though a fraction forms smaller T=3 particles consisting of 180 capsid proteins. Entering capsids are transported along microtubules to the nucleus. Phosphorylation of the capsid is thought to induce exposure of nuclear localization signal in the C-terminal portion of the capsid protein that allows binding to the nuclear pore complex via the importin (karyopherin-) alpha and beta. Capsids are imported in intact form through the nuclear pore into the nuclear basket, where it probably binds NUP153. Only capsids that contain the mature viral genome can release the viral DNA and capsid protein into the nucleoplasm. Immature capsids get stuck in the basket. Capsids encapsulate the pre-genomic RNA and the P protein. Pre-genomic RNA is reverse-transcribed into DNA while the capsid is still in the cytoplasm. The capsid can then either be directed to the nucleus, providing more genomes for transcription, or bud through the endoplasmic reticulum to provide new virions. The sequence is that of Capsid protein from Hepatitis B virus genotype A2 subtype adw2 (strain Rutter 1979) (HBV-A).